A 660-amino-acid chain; its full sequence is UvrABC system protein C (660 aa).

Residues E16–V95 form the GIY-YIG domain. Residues D208–A243 form the UVR domain. The interval G469–T501 is disordered. Over residues A476 to D486 the composition is skewed to low complexity.

It belongs to the UvrC family. As to quaternary structure, interacts with UvrB in an incision complex.

Its subcellular location is the cytoplasm. Its function is as follows. The UvrABC repair system catalyzes the recognition and processing of DNA lesions. UvrC both incises the 5' and 3' sides of the lesion. The N-terminal half is responsible for the 3' incision and the C-terminal half is responsible for the 5' incision. The sequence is that of UvrABC system protein C from Salinispora arenicola (strain CNS-205).